Here is a 723-residue protein sequence, read N- to C-terminus: MSESSGSALQPGRPSRQPAVHPENLSLDSSCFSSPPVNFLQELPSYRSIARRRTTVHSRDKQSGTLLKPTDSYSSQLEDRIAENLSSHSLRNYALNISEKRRLRDIQETQMKYLSEWDQWKRYSSKSWKRFLEKAREMTTHLELWREDIRSIEGKFGTGIQSYFSFLRFLVLLNLVIFLIIFMLVLLPVLLTKYKITNSSFVLIPFKDMDKQCTVYPVSSSGLIYFYSYIIDLLSGTGFLEETSLFYGHYTIDGVKFQNFTYDLPLAYLLSTIASLALSLLWIVKRSVEGFKINLIRSEEHFQSYCNKIFAGWDFCITNRSMADLKHSSLRYELRADLEEERMRQKIAERTSEETIRIYSLRLFLNCIVLAVLGACFYAIYVATVFSQEHMKKEIDKMVFGENLFILYLPSIVITLANFITPMIFAKIIRYEDYSPGFEIRLTILRCVFMRLATICVLVFTLGSKITSCDDDTCDLCGYNQKLYPCWETQVGQEMYKLMIFDFIIILAVTLFVDFPRKLLVTYCSSCKLIQCWGQQEFAIPDNVLGIVYGQTICWIGAFFSPLLPAIATLKFIIIFYVKEWSLLYTCRPSPRPFRASNSNFFFLLVLLIGLCLAIIPLTISISRIPSSKACGPFTNFNTTWEVIPKTVSTFPSSLQSFIHGVTSEAFAVPFFMIICLIMFYFIALAGAHKRVVIQLREQLSLESRDKCYLIQKLTEAQRDMRN.

Disordered stretches follow at residues 1-28 (MSES…LSLD) and 51-71 (RRRT…KPTD). The Extracellular segment spans residues 1–168 (MSESSGSALQ…GIQSYFSFLR (168 aa)). Residue Asn-24 is glycosylated (N-linked (GlcNAc...) asparagine). An N-linked (GlcNAc...) asparagine glycan is attached at Asn-84. Ser-89 carries the post-translational modification Phosphoserine. Residue Asn-96 is glycosylated (N-linked (GlcNAc...) asparagine). A helical transmembrane segment spans residues 169-189 (FLVLLNLVIFLIIFMLVLLPV). Over 190 to 219 (LLTKYKITNSSFVLIPFKDMDKQCTVYPVS) the chain is Cytoplasmic. A helical membrane pass occupies residues 220–240 (SSGLIYFYSYIIDLLSGTGFL). The Extracellular portion of the chain corresponds to 241–263 (EETSLFYGHYTIDGVKFQNFTYD). Asn-259 carries an N-linked (GlcNAc...) asparagine glycan. The helical transmembrane segment at 264–284 (LPLAYLLSTIASLALSLLWIV) threads the bilayer. Over 285-362 (KRSVEGFKIN…EETIRIYSLR (78 aa)) the chain is Cytoplasmic. Residues 363-383 (LFLNCIVLAVLGACFYAIYVA) traverse the membrane as a helical segment. Over 384-404 (TVFSQEHMKKEIDKMVFGENL) the chain is Extracellular. A helical membrane pass occupies residues 405 to 425 (FILYLPSIVITLANFITPMIF). The Cytoplasmic portion of the chain corresponds to 426–494 (AKIIRYEDYS…PCWETQVGQE (69 aa)). The helical transmembrane segment at 495–515 (MYKLMIFDFIIILAVTLFVDF) threads the bilayer. Topologically, residues 516–555 (PRKLLVTYCSSCKLIQCWGQQEFAIPDNVLGIVYGQTICW) are extracellular. A helical transmembrane segment spans residues 556–576 (IGAFFSPLLPAIATLKFIIIF). Residues 577-601 (YVKEWSLLYTCRPSPRPFRASNSNF) lie on the Cytoplasmic side of the membrane. The chain crosses the membrane as a helical span at residues 602-622 (FFLLVLLIGLCLAIIPLTISI). Over 623 to 665 (SRIPSSKACGPFTNFNTTWEVIPKTVSTFPSSLQSFIHGVTSE) the chain is Extracellular. An N-linked (GlcNAc...) asparagine glycan is attached at Asn-638. A helical membrane pass occupies residues 666–686 (AFAVPFFMIICLIMFYFIALA). At 687-723 (GAHKRVVIQLREQLSLESRDKCYLIQKLTEAQRDMRN) the chain is on the cytoplasmic side.

Belongs to the TMC family. As to quaternary structure, interacts with PIEZO2; the interaction inhibits PIEZO2-conducted mechanically activated currents.

It is found in the membrane. In terms of biological role, acts as an inhibitory modulator of PIEZO2 mechanosensitive channel in dorsal root ganglion (DRG) neurons through physical interactions or interference with the interaction between PIEZO2 and the cytoskeleton. The sequence is that of Transmembrane channel-like protein 7 from Homo sapiens (Human).